The chain runs to 371 residues: Peptide chain release factor 2 (371 aa).

The residue at position 253 (glutamine 253) is an N5-methylglutamine.

Belongs to the prokaryotic/mitochondrial release factor family. Methylated by PrmC. Methylation increases the termination efficiency of RF2.

It localises to the cytoplasm. Its function is as follows. Peptide chain release factor 2 directs the termination of translation in response to the peptide chain termination codons UGA and UAA. The protein is Peptide chain release factor 2 of Mycobacterium ulcerans (strain Agy99).